The following is a 604-amino-acid chain: Elongation factor 4 1 (604 aa).

A tr-type G domain is found at 10-191; sequence EHIRNFCIIA…AIVDSVPAPT (182 aa). Residues 22-27 and 138-141 contribute to the GTP site; these read DHGKST and NKID.

Belongs to the TRAFAC class translation factor GTPase superfamily. Classic translation factor GTPase family. LepA subfamily.

It is found in the cell inner membrane. It catalyses the reaction GTP + H2O = GDP + phosphate + H(+). Required for accurate and efficient protein synthesis under certain stress conditions. May act as a fidelity factor of the translation reaction, by catalyzing a one-codon backward translocation of tRNAs on improperly translocated ribosomes. Back-translocation proceeds from a post-translocation (POST) complex to a pre-translocation (PRE) complex, thus giving elongation factor G a second chance to translocate the tRNAs correctly. Binds to ribosomes in a GTP-dependent manner. This Rhodopirellula baltica (strain DSM 10527 / NCIMB 13988 / SH1) protein is Elongation factor 4 1.